A 1849-amino-acid polypeptide reads, in one-letter code: Mitogen-activated protein kinase kinase kinase mkh1 (1849 aa).

The Protein kinase domain maps to 1556–1825 (WFKGQLIGKG…TKLLAEHPFC (270 aa)). ATP-binding positions include 1562–1570 (IGKGTYGRV) and K1585. Catalysis depends on D1686, which acts as the Proton acceptor.

This sequence belongs to the protein kinase superfamily. STE Ser/Thr protein kinase family. MAP kinase kinase kinase subfamily.

It carries out the reaction L-seryl-[protein] + ATP = O-phospho-L-seryl-[protein] + ADP + H(+). The catalysed reaction is L-threonyl-[protein] + ATP = O-phospho-L-threonyl-[protein] + ADP + H(+). Functionally, mitogen-activated protein kinase kinase kinase, part of the mkh1-mkk1-spm1 MAPK cascade that regulates vegetative growth, conidial formation, colony surface hydrophobicity, osmotic stress, cell wall integrity maintenance, carbon and nitrogen source utilization, chitin distribution, septa formation, and pathogenicity. This is Mitogen-activated protein kinase kinase kinase mkh1 from Cytospora mali (Apple Valsa canker fungus).